A 1827-amino-acid polypeptide reads, in one-letter code: MAKRKFSGLEITLIVLFVIVFIIAIALIAVLATKTPAVEEVNPSSSTPTTTSTTTSTSGSVSCPSELNEVVNERINCIPEQSPTQAICAQRNCCWRPWNNSDIPWCFFVDNHGYNVEGMTTTSTGLEARLNRKSTPTLFGNDINNVLLTTESQTANRLRFKLTDPNNKRYEVPHQFVTEFAGPAATETLYDVQVTENPFSIKVIRKSNNRILFDSSIGPLVYSDQYLQISTRLPSEYMYGFGEHVHKRFRHDLYWKTWPIFTRDQHTDDNNNNLYGHQTFFMCIEDTTGKSFGVFLMNSNAMEIFIQPTPIVTYRVIGGILDFYIFLGDTPEQVVQQYQELIGRPAMPAYWSLGFQLSRWNYNSLDVVKEVVRRNREALIPFDTQVSDIDYMEDKKDFTYDRVAYNGLPDFVQDLHDHGQKYVIILDPAISINRRASGEAYESYDRGNAQNVWVNESDGTTPIVGEVWPGDTVYPDFTSPNCIEWWANECNIFHQEVNYDGLWIDMNEVSSFVQGSNKGCNDNTLNYPPYIPDIVDKLMYSKTLCMDSVQYWGKQYDVHSLYGYSMAIATERAVERVFPNKRSFILTRSTFAGSGRHAAHWLGDNTATWEQMEWSITGMLEFGLFGMPLVGADICGFLAETTEELCRRWMQLGAFYPFSRNHNADGFEHQDPAFFGQDSLLVKSSRHYLNIRYTLLPFLYTLFYKAHAFGETVARPVLHEFYEDTNSWVEDREFLWGPALLITPVLTQGAETVSAYIPDAVWYDYETGAKRPWRKQRVEMSLPADKIGLHLRGGYIIPIQQPAVTTTASRMNPLGLIIALNDDNTAVGDFFWDDGETKDTVQNDNYILYTFAVSNNNLNITCTHELYSEGTTLAFQTIKILGVTETVTQVTVAENNQSMSTHSNFTYDPSNQVLLIENLNFNLGRNFRVQWDQTFLESEKITCYPDADIATQEKCTQRGCIWDTNTVNPRAPECYFPKTDNPYSVSSTQYSPTGITADLQLNPTRTRITLPSEPITNLRVEVKYHKNDMVQFKIFDPQNKRYEVPVPLDIPATPTSTQENRLYDVEIKENPFGIQIRRRSTGKVIWDSCLPGFAFNDQFIQISTRLPSEYIYGFGEAEHTAFKRDLNWHTWGMFTRDQPPGYKLNSYGFHPYYMALEDEGNAHGVLLLNSNAMDVTFMPTPALTYRVIGGILDFYMFLGPTPEVATQQYHEVIGHPVMPPYWSLGFQLCRYGYRNTSEIIELYEGMVAADIPYDVQYTDIDYMERQLDFTIDENFRELPQFVDRIRGEGMRYIIILDPAISGNETRPYPAFDRGEAKDVFVKWPNTSDICWAKVWPDLPNITIDESLTEDEAVNASRAHAAFPDFFRNSTAEWWTREILDFYNNYMKFDGLWIDMNEPSSFVNGTTTNVCRNTELNYPPYFPELTKRTDGLHFRTMCMETEHILSDGSSVLHYDVHNLYGWSQAKPTYDALQKTTGKRGIVISRSTYPTAGRWAGHWLGDNYARWDNMDKSIIGMMEFSLFGISYTGADICGFFNDSEYHLCTRWTQLGAFYPFARNHNIQFTRRQDPVSWNQTFVEMTRNVLNIRYTLLPYFYTQLHEIHAHGGTVIRPLMHEFFDDRTTWDIFLQFLWGPAFMVTPVLEPYTTVVRGYVPNARWFDYHTGEDIGIRGQVQDLTLLMNAINLHVRGGHILPCQEPARTTFLSRQKYMKLIVAADDNHMAQGSLFWDDGDTIDTYERDLYLSVQFNLNKTTLTSTLLKTGYINKTEIRLGYVHVWGIGNTLINEVNLMYNEINYPLIFNQTQAQEILNIDLTAHEVTLDDPIEISWS.

The Cytoplasmic segment spans residues 2–12 (AKRKFSGLEIT). Ser7 is modified (phosphoserine; by PKA). Residues 13 to 32 (LIVLFVIVFIIAIALIAVLA) traverse the membrane as a helical; Signal-anchor for type II membrane protein segment. Residues 33–1827 (TKTPAVEEVN…LDDPIEISWS (1795 aa)) lie on the Lumenal side of the membrane. The interval 39–64 (EEVNPSSSTPTTTSTTTSTSGSVSCP) is disordered. Low complexity predominate over residues 43-64 (PSSSTPTTTSTTTSTSGSVSCP). Positions 61-110 (VSCPSELNEVVNERINCIPEQSPTQAICAQRNCCWRPWNNSDIPWCFFVD) constitute a P-type 1 domain. 3 cysteine pairs are disulfide-bonded: Cys63/Cys94, Cys77/Cys93, and Cys88/Cys106. N-linked (GlcNAc...) asparagine glycosylation is present at Asn99. Positions 110–1007 (DNHGYNVEGM…DLQLNPTRTR (898 aa)) are isomaltase. Substrate contacts are provided by Asp264 and Asp388. Sulfotyrosine is present on residues Tyr391 and Tyr400. The N-linked (GlcNAc...) asparagine glycan is linked to Asn455. Residue Asp505 is the Nucleophile; for isomaltase activity of the active site. Cys520 and Cys545 are oxidised to a cystine. A substrate-binding site is contributed by Arg588. Asp604 acts as the For isomaltase activity in catalysis. A disulfide bridge links Cys635 with Cys646. His662 provides a ligand contact to substrate. Asn859, Asn896, and Asn904 each carry an N-linked (GlcNAc...) asparagine glycan. The P-type 2 domain occupies 932–978 (DQTFLESEKITCYPDADIATQEKCTQRGCIWDTNTVNPRAPECYFPK). A sucrase region spans residues 1008–1827 (ITLPSEPITN…LDDPIEISWS (820 aa)). Asn1235, Asn1303, Asn1325, Asn1340, Asn1354, and Asn1368 each carry an N-linked (GlcNAc...) asparagine glycan. A sulfotyrosine mark is found at Tyr1382 and Tyr1385. Asp1394 serves as the catalytic Nucleophile; for sucrase activity. The For sucrase activity role is filled by Glu1397. N-linked (GlcNAc...) asparagine glycosylation occurs at Asn1403. The active-site Proton donor; for sucrase activity is the Asp1500. N-linked (GlcNAc...) asparagine glycosylation is found at Asn1535, Asn1572, Asn1748, Asn1763, and Asn1799.

The protein belongs to the glycosyl hydrolase 31 family. As to quaternary structure, the resulting sucrase and isomaltase subunits stay associated with one another in a complex by non-covalent linkages. In terms of processing, the precursor is proteolytically cleaved when exposed to pancreatic proteases in the intestinal lumen. N- and O-glycosylated. Post-translationally, sulfated.

It localises to the apical cell membrane. The enzyme catalyses Hydrolysis of sucrose and maltose by an alpha-D-glucosidase-type action.. It carries out the reaction Hydrolysis of (1-&gt;6)-alpha-D-glucosidic linkages in some oligosaccharides produced from starch and glycogen by alpha-amylase, and in isomaltose.. Plays an important role in the final stage of carbohydrate digestion. Isomaltase activity is specific for both alpha-1,4- and alpha-1,6-oligosaccharides. This chain is Sucrase-isomaltase, intestinal (SI), found in Oryctolagus cuniculus (Rabbit).